Reading from the N-terminus, the 134-residue chain is UPF0412 protein YaaI (134 aa).

The N-terminal stretch at 1–23 (MKSVITISASLAISLMLCCTAQA) is a signal peptide.

It belongs to the UPF0412 family.

This Escherichia coli (strain UTI89 / UPEC) protein is UPF0412 protein YaaI.